Here is a 296-residue protein sequence, read N- to C-terminus: Zinc finger CCCH-type antiviral protein 1-like (296 aa).

The residue at position 2 (Ala2) is an N-acetylalanine. 2 C3H1-type zinc fingers span residues Leu111–His136 and Val198–Ile219.

This chain is Zinc finger CCCH-type antiviral protein 1-like (Zc3hav1l), found in Mus musculus (Mouse).